We begin with the raw amino-acid sequence, 514 residues long: Ribonuclease Y (514 aa).

A helical membrane pass occupies residues 3-23; sequence YMIIYEIIAGILIVVAILIHF. Residues 204–289 form the KH domain; that stretch reads TVHVVTLPND…EMVEKAEKEL (86 aa). The region spanning 330–423 is the HD domain; the sequence is VLKHSVEVAY…VQAADAISAA (94 aa).

It belongs to the RNase Y family.

It localises to the cell membrane. Functionally, endoribonuclease that initiates mRNA decay. The protein is Ribonuclease Y of Clostridium kluyveri (strain ATCC 8527 / DSM 555 / NBRC 12016 / NCIMB 10680 / K1).